The chain runs to 556 residues: Probable glucomannan 4-beta-mannosyltransferase 3 (556 aa).

The chain crosses the membrane as a helical span at residues 56–76; it reads IFVFIPILKCLVTICLVMSLL. Asp159 is a catalytic residue. Positions 218 and 220 each coordinate substrate. The active site involves Asp312. The next 4 helical transmembrane spans lie at 391–411, 428–448, 509–529, and 530–550; these read IVVHIFTFVFYCLILPTTVLF, ITILNAIATPRSLHLLVFWIL, LVVGLYIFFCGCYDFAYGGSY, and FYVYLFLQSCAFFVAGVGYIG.

It belongs to the glycosyltransferase 2 family. Plant cellulose synthase-like A subfamily.

It localises to the golgi apparatus membrane. The catalysed reaction is GDP-mannose + (glucomannan)n = GDP + (glucomannan)n+1.. In terms of biological role, probable mannan synthase which consists of a 4-beta-mannosyltransferase activity on mannan using GDP-mannose. The beta-1,4-mannan product is the backbone for galactomannan synthesis by galactomannan galactosyltransferase. Galactomannan is a noncellulosic polysaccharides of plant cell wall. The protein is Probable glucomannan 4-beta-mannosyltransferase 3 of Arabidopsis thaliana (Mouse-ear cress).